We begin with the raw amino-acid sequence, 296 residues long: tRNA uridine(34) hydroxylase (296 aa).

The Rhodanese domain occupies 130-225; it reads RGDDVVFFDG…YGEAYGNDGY (96 aa). Catalysis depends on Cys-185, which acts as the Cysteine persulfide intermediate.

This sequence belongs to the TrhO family.

It catalyses the reaction uridine(34) in tRNA + AH2 + O2 = 5-hydroxyuridine(34) in tRNA + A + H2O. In terms of biological role, catalyzes oxygen-dependent 5-hydroxyuridine (ho5U) modification at position 34 in tRNAs. The protein is tRNA uridine(34) hydroxylase of Corynebacterium kroppenstedtii (strain DSM 44385 / JCM 11950 / CIP 105744 / CCUG 35717).